Reading from the N-terminus, the 86-residue chain is Large ribosomal subunit protein bL27 (86 aa).

Residues 1–10 (MAQKKGGGST) show a composition bias toward gly residues. Residues 1–20 (MAQKKGGGSTRNGRDSESKR) form a disordered region.

The protein belongs to the bacterial ribosomal protein bL27 family.

The sequence is that of Large ribosomal subunit protein bL27 from Bordetella avium (strain 197N).